A 421-amino-acid polypeptide reads, in one-letter code: Serine--tRNA ligase (421 aa).

229–231 (TAE) serves as a coordination point for L-serine. 260–262 (RSE) contributes to the ATP binding site. E283 is an L-serine binding site. Residue 347–350 (EISS) participates in ATP binding. Residue S382 participates in L-serine binding.

The protein belongs to the class-II aminoacyl-tRNA synthetase family. Type-1 seryl-tRNA synthetase subfamily. In terms of assembly, homodimer. The tRNA molecule binds across the dimer.

The protein resides in the cytoplasm. It carries out the reaction tRNA(Ser) + L-serine + ATP = L-seryl-tRNA(Ser) + AMP + diphosphate + H(+). The enzyme catalyses tRNA(Sec) + L-serine + ATP = L-seryl-tRNA(Sec) + AMP + diphosphate + H(+). It functions in the pathway aminoacyl-tRNA biosynthesis; selenocysteinyl-tRNA(Sec) biosynthesis; L-seryl-tRNA(Sec) from L-serine and tRNA(Sec): step 1/1. In terms of biological role, catalyzes the attachment of serine to tRNA(Ser). Is also able to aminoacylate tRNA(Sec) with serine, to form the misacylated tRNA L-seryl-tRNA(Sec), which will be further converted into selenocysteinyl-tRNA(Sec). The protein is Serine--tRNA ligase of Symbiobacterium thermophilum (strain DSM 24528 / JCM 14929 / IAM 14863 / T).